The following is a 524-amino-acid chain: MADDIDIEAMLEAPYKKDENKLSSANGHEERSKKRKKSKSRSRSHERKRSKSKERKRSRDRERKKSKSRERKRSRSKERRRSRSRSRDRRFRGRYRSPYSGPKFNSAIRGKIGLPHSIKLSRRRSRSKSPFRKDKSPVREPIDNLTPEERDARTVFCMQLAARIRPRDLEEFFSTVGKVRDVRMISDRNSRRSKGIAYVEFVDVSSVPLAIGLTGQRVLGVPIIVQASQAEKNRAAAMANNLQKGSAGPMRLYVGSLHFNITEDMLRGIFEPFGRIESIQLMMDSETGRSKGYGFITFSDSECAKKALEQLNGFELAGRPMKVGHVTERTDASSASSFLDSDELERTGIDLGTTGRLQLMARLAEGTGLQIPPAAQQALQMSGSLAFGAVADLQTRLSQQTEASALAAAASVQPLATQCFQLSNMFNPQTEEEVGWDTEIKDDVIEECNKHGGVIHIYVDKNSAQGNVYVKCPSIAAAIAAVNALHGRWFAGKMITAAYVPLPTYHNLFPDSMTATQLLVPSRR.

Positions 1-146 are disordered; it reads MADDIDIEAM…PVREPIDNLT (146 aa). Ala-2 bears the N-acetylalanine mark. The segment covering 14-32 has biased composition (basic and acidic residues); sequence PYKKDENKLSSANGHEERS. 2 stretches are compositionally biased toward basic residues: residues 33–56 and 64–95; these read KKRK…KERK and KKSK…RGRY. Tyr-95 is subject to Phosphotyrosine. Residues Ser-97 and Ser-100 each carry the phosphoserine modification. Residue Lys-111 forms a Glycyl lysine isopeptide (Lys-Gly) (interchain with G-Cter in SUMO2) linkage. Ser-117 carries the phosphoserine modification. A Glycyl lysine isopeptide (Lys-Gly) (interchain with G-Cter in SUMO2) cross-link involves residue Lys-119. The span at 119–130 shows a compositional bias: basic residues; it reads KLSRRRSRSKSP. Residues Ser-121 and Ser-136 each carry the phosphoserine modification. The span at 131-146 shows a compositional bias: basic and acidic residues; the sequence is FRKDKSPVREPIDNLT. Thr-146 carries the phosphothreonine modification. Residues 153 to 230 enclose the RRM 1 domain; sequence RTVFCMQLAA…VPIIVQASQA (78 aa). Lys-244 is covalently cross-linked (Glycyl lysine isopeptide (Lys-Gly) (interchain with G-Cter in SUMO2)). One can recognise an RRM 2 domain in the interval 250-328; it reads MRLYVGSLHF…RPMKVGHVTE (79 aa). An activating domain region spans residues 291–355; it reads KGYGFITFSD…RTGIDLGTTG (65 aa). The interaction with JUN stretch occupies residues 291-400; it reads KGYGFITFSD…ADLQTRLSQQ (110 aa). A phosphoserine mark is found at Ser-334, Ser-337, and Ser-341. The interval 355 to 400 is interaction with ESR1 and ESR2; sequence GRLQLMARLAEGTGLQIPPAAQQALQMSGSLAFGAVADLQTRLSQQ. The segment at 400–524 is interaction with NCOA6; it reads QTEASALAAA…ATQLLVPSRR (125 aa). The RRM 3 domain occupies 439–502; it reads EIKDDVIEEC…KMITAAYVPL (64 aa).

It belongs to the splicing factor SR family. Interacts with NCOA6 and JUN. Interacts with ESR1 and ESR2, in the presence of estradiol (E2). Interacts with RSRC1 (via Arg/Ser-rich domain). Interacts with SF3B1. Interacts with ZNF106 (via N-terminus).

The protein resides in the nucleus speckle. RNA-binding protein that acts as a pre-mRNA splicing factor. Acts by promoting exon inclusion via regulation of exon cassette splicing. Also acts as a transcriptional coactivator for steroid nuclear receptors ESR1/ER-alpha and ESR2/ER-beta, and JUN/AP-1, independently of the pre-mRNA splicing factor activity. This chain is RNA-binding protein 39 (RBM39), found in Pongo abelii (Sumatran orangutan).